A 398-amino-acid chain; its full sequence is Chalcone synthase 1 (398 aa).

The active site involves C167.

The protein belongs to the thiolase-like superfamily. Chalcone/stilbene synthases family.

The enzyme catalyses (E)-4-coumaroyl-CoA + 3 malonyl-CoA + 3 H(+) = 2',4,4',6'-tetrahydroxychalcone + 3 CO2 + 4 CoA. It functions in the pathway secondary metabolite biosynthesis; flavonoid biosynthesis. In terms of biological role, the primary product of this enzyme is 4,2',4',6'-tetrahydroxychalcone (also termed naringenin-chalcone or chalcone) which can under specific conditions spontaneously isomerize into naringenin. The sequence is that of Chalcone synthase 1 (CHS1) from Gerbera hybrida (Daisy).